Consider the following 149-residue polypeptide: Calmodulin (149 aa).

Alanine 2 is subject to N-acetylalanine. EF-hand domains lie at 8 to 43 (EQIAEFKEAFSLFDKDGDGTITTKELGTVMRSLGQN), 44 to 79 (PTEAELQDMINEVDADGDGTIDFPEFLTMMARKMKD), 81 to 116 (DSEEEIREAFRVFDKDGDGFISAAELRHVMTNLGEK), and 117 to 149 (LTDEEVDEMIREADIDGDGQVNYEEFVKMMTSK). Residues aspartate 21, aspartate 23, aspartate 25, threonine 27, glutamate 32, aspartate 57, aspartate 59, aspartate 61, threonine 63, glutamate 68, aspartate 94, aspartate 96, aspartate 98, and glutamate 105 each coordinate Ca(2+). An N6,N6,N6-trimethyllysine modification is found at lysine 116. 5 residues coordinate Ca(2+): aspartate 130, aspartate 132, aspartate 134, glutamine 136, and glutamate 141.

It belongs to the calmodulin family.

Calmodulin mediates the control of a large number of enzymes, ion channels and other proteins by Ca(2+). Among the enzymes to be stimulated by the calmodulin-Ca(2+) complex are a number of protein kinases and phosphatases. This Renilla reniformis (Sea pansy) protein is Calmodulin.